Reading from the N-terminus, the 433-residue chain is Enolase (433 aa).

Gln-167 contributes to the (2R)-2-phosphoglycerate binding site. Glu-209 acts as the Proton donor in catalysis. Asp-246, Glu-291, and Asp-318 together coordinate Mg(2+). The (2R)-2-phosphoglycerate site is built by Lys-343, Arg-372, Ser-373, and Lys-394. Lys-343 serves as the catalytic Proton acceptor.

Belongs to the enolase family. As to quaternary structure, component of the RNA degradosome, a multiprotein complex involved in RNA processing and mRNA degradation. The cofactor is Mg(2+).

It is found in the cytoplasm. Its subcellular location is the secreted. The protein resides in the cell surface. It catalyses the reaction (2R)-2-phosphoglycerate = phosphoenolpyruvate + H2O. Its pathway is carbohydrate degradation; glycolysis; pyruvate from D-glyceraldehyde 3-phosphate: step 4/5. Functionally, catalyzes the reversible conversion of 2-phosphoglycerate (2-PG) into phosphoenolpyruvate (PEP). It is essential for the degradation of carbohydrates via glycolysis. The polypeptide is Enolase (Shewanella piezotolerans (strain WP3 / JCM 13877)).